The following is a 161-amino-acid chain: uncharacterized protein (161 aa).

In terms of assembly, interacts with ribosomes.

This is an uncharacterized protein from Saccharomyces cerevisiae (strain ATCC 204508 / S288c) (Baker's yeast).